The following is a 786-amino-acid chain: Pentatricopeptide repeat-containing protein 10, chloroplastic (786 aa).

Residues 1-71 (MEATGRGLFP…HQTPTPPHSF (71 aa)) are disordered. Residues 1–95 (MEATGRGLFP…HPLPTLAAFL (95 aa)) constitute a chloroplast transit peptide. Residues 27 to 36 (PAAPPPPSPS) are compositionally biased toward pro residues. Residues 37–50 (SLPLDSLLLHLTAP) are compositionally biased toward low complexity. 18 PPR repeats span residues 137–167 (DASA…TPLP), 173–207 (DVRA…GVAP), 208–243 (TLVT…GVEP), 244–278 (DGFT…GHAP), 279–313 (CVVT…GCQP), 314–348 (DAVT…GLLP), 349–383 (NAFT…GFVP), 384–418 (NVNT…GCTP), 419–453 (NRVT…GVEL), 454–488 (SRDT…GFTP), 489–523 (CITT…GFKP), 524–558 (NEQS…GAVF), 560–594 (SWVI…GYNP), 595–629 (DLVI…GLSP), 630–664 (DLIT…QTMK), 666–700 (DVVS…GMAP), 701–735 (CAVT…GLKP), and 736–770 (MELT…DLDF).

It belongs to the PPR family. P subfamily. As to quaternary structure, forms homodimers.

It localises to the plastid. Its subcellular location is the chloroplast stroma. Its function is as follows. Involved in chloroplast mRNA stability. Binds specifically to two intergenic RNA regions of similar sequence located in the chloroplast atpH 5'-UTR and psaJ 3'-UTR, and serves as a barrier to RNA decay. Binding to a specific site in the intergenic region of the chloroplast atpH is sufficient to block 5'-3' and 3'-5' exonucleases. Acts as a protein barrier to block mRNA degradation by exonucleases, and defines processed mRNA termini in chloroplasts. Remodels the structure of the atpH ribosome-binding site in a manner that can account for its ability to enhance translation. Stabilizes a RNA 3'-end downstream from psaI. Binds atpH RNA as a monomer. This chain is Pentatricopeptide repeat-containing protein 10, chloroplastic, found in Zea mays (Maize).